Reading from the N-terminus, the 461-residue chain is Trigger factor (461 aa).

A PPIase FKBP-type domain is found at 166–245 (GDFANIDLTA…VNSVKAEELP (80 aa)).

It belongs to the FKBP-type PPIase family. Tig subfamily.

Its subcellular location is the cytoplasm. It carries out the reaction [protein]-peptidylproline (omega=180) = [protein]-peptidylproline (omega=0). Its function is as follows. Involved in protein export. Acts as a chaperone by maintaining the newly synthesized protein in an open conformation. Functions as a peptidyl-prolyl cis-trans isomerase. This is Trigger factor from Bifidobacterium animalis subsp. lactis (strain AD011).